The following is a 429-amino-acid chain: 3-phosphoshikimate 1-carboxyvinyltransferase (429 aa).

The 3-phosphoshikimate site is built by K23, S24, and R28. K23 contacts phosphoenolpyruvate. The phosphoenolpyruvate site is built by G95 and R123. Positions 168, 170, 316, and 343 each coordinate 3-phosphoshikimate. Q170 provides a ligand contact to phosphoenolpyruvate. D316 functions as the Proton acceptor in the catalytic mechanism. Positions 347 and 389 each coordinate phosphoenolpyruvate.

The protein belongs to the EPSP synthase family. Monomer.

Its subcellular location is the cytoplasm. It carries out the reaction 3-phosphoshikimate + phosphoenolpyruvate = 5-O-(1-carboxyvinyl)-3-phosphoshikimate + phosphate. Its pathway is metabolic intermediate biosynthesis; chorismate biosynthesis; chorismate from D-erythrose 4-phosphate and phosphoenolpyruvate: step 6/7. Its function is as follows. Catalyzes the transfer of the enolpyruvyl moiety of phosphoenolpyruvate (PEP) to the 5-hydroxyl of shikimate-3-phosphate (S3P) to produce enolpyruvyl shikimate-3-phosphate and inorganic phosphate. In Bacillus cereus (strain ZK / E33L), this protein is 3-phosphoshikimate 1-carboxyvinyltransferase.